Consider the following 510-residue polypeptide: Cytochrome P450 705A20 (510 aa).

A helical transmembrane segment spans residues 7–27 (QHCFSFILLCFFSLLCYSLLF).

Belongs to the cytochrome P450 family. Heme is required as a cofactor.

The protein localises to the membrane. This Arabidopsis thaliana (Mouse-ear cress) protein is Cytochrome P450 705A20 (CYP705A20).